Here is a 569-residue protein sequence, read N- to C-terminus: Putative diguanylate cyclase DgcQ (569 aa).

Helical transmembrane passes span 25 to 45 and 365 to 385; these read LGPG…STLL and IALT…WYVI. A GGDEF domain is found at 433–568; sequence HPFSVIQVDL…GRNRVFASDN (136 aa). Position 441 (D441) interacts with Mg(2+). Positions 449, 454, and 458 each coordinate substrate. E484 contributes to the Mg(2+) binding site. E484 functions as the Proton acceptor in the catalytic mechanism.

As to quaternary structure, homodimer. It depends on Mg(2+) as a cofactor.

The protein resides in the cell inner membrane. The enzyme catalyses 2 GTP = 3',3'-c-di-GMP + 2 diphosphate. The protein operates within glycan metabolism; bacterial cellulose biosynthesis. It functions in the pathway purine metabolism; 3',5'-cyclic di-GMP biosynthesis. Functionally, catalyzes the synthesis of cyclic-di-GMP (c-di-GMP) via the condensation of 2 GTP molecules. Cyclic-di-GMP is a second messenger which controls cell surface-associated traits in bacteria. Involved in the regulation of cellulose production. This Shigella flexneri protein is Putative diguanylate cyclase DgcQ.